The following is a 150-amino-acid chain: Large ribosomal subunit protein bL9 (150 aa).

It belongs to the bacterial ribosomal protein bL9 family.

Binds to the 23S rRNA. The polypeptide is Large ribosomal subunit protein bL9 (Thioalkalivibrio sulfidiphilus (strain HL-EbGR7)).